We begin with the raw amino-acid sequence, 314 residues long: Probable serine/threonine-protein kinase WNK11 (314 aa).

Residues 1-22 form a disordered region; it reads MMTCASSDDNESEKDKDSESFV. The region spanning 31 to 289 is the Protein kinase domain; it reads GRYGELLGSG…AAELLCDPFF (259 aa). 111–114 contacts ATP; that stretch reads TEIC. The Proton acceptor role is filled by aspartate 178. The disordered stretch occupies residues 295–314; sequence DDDEDGENNDNNGAGRIVVS.

Belongs to the protein kinase superfamily. Ser/Thr protein kinase family. WNK subfamily.

It catalyses the reaction L-seryl-[protein] + ATP = O-phospho-L-seryl-[protein] + ADP + H(+). The catalysed reaction is L-threonyl-[protein] + ATP = O-phospho-L-threonyl-[protein] + ADP + H(+). May regulate flowering time by modulating the photoperiod pathway. This chain is Probable serine/threonine-protein kinase WNK11 (WNK11), found in Arabidopsis thaliana (Mouse-ear cress).